Here is a 76-residue protein sequence, read N- to C-terminus: Large ribosomal subunit protein eL20 (76 aa).

It belongs to the eukaryotic ribosomal protein eL20 family. Part of the 50S ribosomal subunit. Binds 23S rRNA.

This is Large ribosomal subunit protein eL20 from Methanococcus maripaludis (strain C7 / ATCC BAA-1331).